The sequence spans 260 residues: 5'-nucleotidase SurE (260 aa).

Residues Asp8, Asp9, Ser43, and Asn96 each contribute to the a divalent metal cation site.

The protein belongs to the SurE nucleotidase family. A divalent metal cation serves as cofactor.

It is found in the cytoplasm. It catalyses the reaction a ribonucleoside 5'-phosphate + H2O = a ribonucleoside + phosphate. Functionally, nucleotidase that shows phosphatase activity on nucleoside 5'-monophosphates. In Ruegeria sp. (strain TM1040) (Silicibacter sp.), this protein is 5'-nucleotidase SurE.